The chain runs to 468 residues: Interstitial collagenase (468 aa).

A signal peptide spans 1 to 18 (MPGLPLLLLLLWGVGSHG). The propeptide at 19–98 (FPAASETQEQ…PRCGVPDVAQ (80 aa)) is activation peptide. The short motif at 89 to 96 (PRCGVPDV) is the Cysteine switch element. Zn(2+) is bound at residue cysteine 91. N-linked (GlcNAc...) asparagine glycosylation occurs at asparagine 119. Ca(2+) is bound by residues aspartate 123 and aspartate 157. The Zn(2+) site is built by histidine 167 and aspartate 169. 4 residues coordinate Ca(2+): aspartate 174, glycine 175, glutamate 177, and glutamine 179. Histidine 182 lines the Zn(2+) pocket. The Ca(2+) site is built by glycine 189, glycine 191, and aspartate 193. Histidine 195 contributes to the Zn(2+) binding site. 3 residues coordinate Ca(2+): aspartate 197, glutamate 198, and aspartate 200. Histidine 217 is a binding site for Zn(2+). Glutamate 218 is a catalytic residue. Residues histidine 221 and histidine 227 each coordinate Zn(2+). Threonine 273 is modified (phosphothreonine). Hemopexin repeat units lie at residues 274–323 (PKVC…WPHL), 324–370 (PNGL…FGFP), 373–421 (VNHI…FPGI), and 422–465 (GNKV…WFNC). An intrachain disulfide couples cysteine 277 to cysteine 465. Positions 284 and 328 each coordinate Ca(2+). The residue at position 359 (tyrosine 359) is a Phosphotyrosine; by PKDCC. Residues aspartate 377 and aspartate 426 each contribute to the Ca(2+) site.

Belongs to the peptidase M10A family. Ca(2+) serves as cofactor. Zn(2+) is required as a cofactor. Tyrosine phosphorylated in platelets by PKDCC/VLK.

It is found in the secreted. The protein localises to the extracellular space. The protein resides in the extracellular matrix. It carries out the reaction Cleavage of the triple helix of collagen at about three-quarters of the length of the molecule from the N-terminus, at 775-Gly-|-Ile-776 in the alpha1(I) chain. Cleaves synthetic substrates and alpha-macroglobulins at bonds where P1' is a hydrophobic residue.. Its activity is regulated as follows. Can be activated without removal of the activation peptide. Cleaves collagens of types I, II, and III at one site in the helical domain. Also cleaves collagens of types VII and X. The polypeptide is Interstitial collagenase (MMP1) (Oryctolagus cuniculus (Rabbit)).